We begin with the raw amino-acid sequence, 294 residues long: Glycine--tRNA ligase alpha subunit (294 aa).

The protein belongs to the class-II aminoacyl-tRNA synthetase family. In terms of assembly, tetramer of two alpha and two beta subunits.

The protein localises to the cytoplasm. It carries out the reaction tRNA(Gly) + glycine + ATP = glycyl-tRNA(Gly) + AMP + diphosphate. This chain is Glycine--tRNA ligase alpha subunit, found in Natranaerobius thermophilus (strain ATCC BAA-1301 / DSM 18059 / JW/NM-WN-LF).